An 879-amino-acid polypeptide reads, in one-letter code: Beta-mannosidase (879 aa).

The first 17 residues, 1–17 (MLLRLLLLLAPCGAGFA), serve as a signal peptide directing secretion. N-linked (GlcNAc...) asparagine glycosylation is found at N35 and N77. C167 and C176 are disulfide-bonded. 190-192 (WDW) provides a ligand contact to substrate. N-linked (GlcNAc...) asparagine glycosylation is present at N297. A substrate-binding site is contributed by N456. The Proton donor role is filled by E457. Disulfide bonds link C540/C629, C732/C761, and C764/C769. E554 acts as the Nucleophile in catalysis. N803 carries an N-linked (GlcNAc...) asparagine glycan.

It belongs to the glycosyl hydrolase 2 family. In terms of assembly, monomer. In terms of processing, N-glycosylated. As to expression, detected in kidney (at protein level). Found in spleen and to a lesser extent in liver. Not detected in kidney or brain.

The protein resides in the lysosome. It carries out the reaction Hydrolysis of terminal, non-reducing beta-D-mannose residues in beta-D-mannosides.. It participates in glycan metabolism; N-glycan degradation. In terms of biological role, exoglycosidase that cleaves the single beta-linked mannose residue from the non-reducing end of all N-linked glycoprotein oligosaccharides. This chain is Beta-mannosidase (MANBA), found in Capra hircus (Goat).